The following is a 299-amino-acid chain: Kruppel-like factor 2 (299 aa).

2 disordered regions span residues 19-38 (YQNA…SHHH) and 146-189 (YSFS…RRDK). Over residues 23 to 38 (HHQHHQQHYHQQSHHH) the composition is skewed to basic residues. Basic and acidic residues predominate over residues 153 to 180 (SGKDEEDPRIPLKDRGRVYHPQSTEKPK). C2H2-type zinc fingers lie at residues 198-222 (HKCF…ERVH), 228-252 (YPCE…YRKH), and 258-280 (FACK…MKRH).

This sequence belongs to the krueppel C2H2-type zinc-finger protein family. As to expression, expressed predominantly in intestine.

The protein localises to the nucleus. Functionally, probable transcription factor which regulates lipid metabolism. The sequence is that of Kruppel-like factor 2 from Caenorhabditis elegans.